We begin with the raw amino-acid sequence, 525 residues long: Alpha-ketoglutaric semialdehyde dehydrogenase 2 (525 aa).

Residues lysine 185, glutamate 188, and 242-247 (GSRQGG) each bind NAD(+). Glutamate 266 serves as the catalytic Proton acceptor. Residue cysteine 303 is the Nucleophile of the active site. Glutamate 394 serves as a coordination point for NAD(+).

Belongs to the aldehyde dehydrogenase family. In terms of assembly, homodimer.

It carries out the reaction 2,5-dioxopentanoate + NADP(+) + H2O = 2-oxoglutarate + NADPH + 2 H(+). It catalyses the reaction 2,5-dioxopentanoate + NAD(+) + H2O = 2-oxoglutarate + NADH + 2 H(+). It participates in carbohydrate acid metabolism; D-glucarate degradation. It functions in the pathway carbohydrate acid metabolism; galactarate degradation. In terms of biological role, catalyzes the NAD(P)(+)-dependent oxidation of alpha-ketoglutaric semialdehyde (alphaKGSA) to alpha-ketoglutarate. Involved in D-glucarate/D-galactarate metabolism. Prefers NAD(+) to NADP(+) as a cosubstrate. The polypeptide is Alpha-ketoglutaric semialdehyde dehydrogenase 2 (Azospirillum brasilense).